A 523-amino-acid chain; its full sequence is MTVSQLLKQRVRYAPYLSKVRRAEELLPLFKHGQYIGWSGFTGVGAPKVIPTALADHVEKNGLQGQLAFNLFVGASAGPEENRWADLDMILRRAPHQVGKPIARAINDGRIKFFDKHLSMFPQDLTYGYYTRERTDGKILDYAIVEATAIKEDGSIVLGPSVGGSPEFMSAADKLIVEVNTATPSFEGLHDIDMPVLPPHRVPYPYTRVDERSGLDAVPVDPARVVALVESTERDKVGPNTPSDEGSRAIAGHLVEFFENEVRHGRLPANLLPLQSGIGNIANAVIEGLAGASFRNLTVWTEVLQDSFLDLFENGSLEFATATSIRLTEAGFEKFFANWDEYSSKLCLRSQVVSNSPEMIRRLGVIAMNTPVEVDIYAHANSTNVSGSRMLNGLGGSADFLRNAKLSIMHAPSARPSKTDPTGISTIVPMASHVDQTEHDLDVLVTDQGLADLRGLCPRERAREIIRQCAHPDYKPILTDYLDRAEHYAQRSRSMHEPHILQQALRFHTHLAEKGTMKVPSWD.

CoA is bound at residue 277–281 (GIGNI). Residue Glu302 is the 5-glutamyl coenzyme A thioester intermediate of the active site. 2 residues coordinate CoA: Asn392 and Gly396.

It belongs to the acetyl-CoA hydrolase/transferase family.

The protein resides in the cytoplasm. It carries out the reaction acetyl-CoA + H2O = acetate + CoA + H(+). In terms of biological role, presumably involved in regulating the intracellular acetyl-CoA pool for fatty acid and cholesterol synthesis and fatty acid oxidation. The sequence is that of Acetyl-CoA hydrolase (ACH1) from Eremothecium gossypii (strain ATCC 10895 / CBS 109.51 / FGSC 9923 / NRRL Y-1056) (Yeast).